A 209-amino-acid polypeptide reads, in one-letter code: Ribosomal RNA large subunit methyltransferase E (209 aa).

S-adenosyl-L-methionine contacts are provided by G63, W65, D83, D99, and D124. K164 (proton acceptor) is an active-site residue.

The protein belongs to the class I-like SAM-binding methyltransferase superfamily. RNA methyltransferase RlmE family.

It localises to the cytoplasm. It carries out the reaction uridine(2552) in 23S rRNA + S-adenosyl-L-methionine = 2'-O-methyluridine(2552) in 23S rRNA + S-adenosyl-L-homocysteine + H(+). Specifically methylates the uridine in position 2552 of 23S rRNA at the 2'-O position of the ribose in the fully assembled 50S ribosomal subunit. This Pseudoalteromonas translucida (strain TAC 125) protein is Ribosomal RNA large subunit methyltransferase E.